Here is a 312-residue protein sequence, read N- to C-terminus: Acetyl-coenzyme A carboxylase carboxyl transferase subunit alpha (312 aa).

A CoA carboxyltransferase C-terminal domain is found at N36–E286.

It belongs to the AccA family. As to quaternary structure, acetyl-CoA carboxylase is a heterohexamer composed of biotin carboxyl carrier protein (AccB), biotin carboxylase (AccC) and two subunits each of ACCase subunit alpha (AccA) and ACCase subunit beta (AccD).

Its subcellular location is the cytoplasm. The catalysed reaction is N(6)-carboxybiotinyl-L-lysyl-[protein] + acetyl-CoA = N(6)-biotinyl-L-lysyl-[protein] + malonyl-CoA. Its pathway is lipid metabolism; malonyl-CoA biosynthesis; malonyl-CoA from acetyl-CoA: step 1/1. In terms of biological role, component of the acetyl coenzyme A carboxylase (ACC) complex. First, biotin carboxylase catalyzes the carboxylation of biotin on its carrier protein (BCCP) and then the CO(2) group is transferred by the carboxyltransferase to acetyl-CoA to form malonyl-CoA. The polypeptide is Acetyl-coenzyme A carboxylase carboxyl transferase subunit alpha (Campylobacter jejuni subsp. doylei (strain ATCC BAA-1458 / RM4099 / 269.97)).